The primary structure comprises 983 residues: MVSYASIPQSSDEAHSTVGASLQLDERKQDLNNFIQRHIGPSSADIQQMLDVLGFSSLDDLIEKTVPSAIRLHEQLQLPEAQTEYAALAKLKQIASKNQVFRSYIGMGYYDTITPSVIGRNILENPGWYTAYTPYQPEIAQGRLEALLNFQTMIIDLTGLEIANASLLDEATAAAEAMSMSYGVSKNKANAYFVSHDCHPQIIDVLQTRAKPLGIEIIIGDHQTFDFDKPIFGAVLQYPASDGTIYDYRAFIETSHAQGALVTVAADPLSLTLLTPPGEFGADIAVGSTQRFGIPLGFGGPHAAYFATKEEYKRQVPGRIVGVSKDVHGKTALRLALQTREQHIRREKATSNICTAQVLLAVMASMYAVYHGPEGLKQIAERIHHLTLVLGVWLQRLGYTITSQSFFDTLQIKLGEKPLQEILEAAEAYRINLRIVDTSTVGISLDETTTLEDVKDICRIFAGTDELPFVLNVQEFDWIIQQSSLKDEPFSRQSSYLTHPVFNRYHSETELLRYLHRLETKDLSLTTSMIPLGSCTMKLNATSEMIPVTWEEFGRIHPFAPLTQTRGYQILFQQLEAWLGEITGFAGVSLQPNAGSQGEYTGLLVIRQYHQSRGETHRNVCLIPNSAHGTNPASAVMCGMKVVAVACDAGGNIDIDDLKAKAEKHSHELAALMVTYPSTHGVFEAGIQEICAVIHSHGGQVYMDGANMNAQVGICRPGDIGADVCHLNLHKTFCIPHGGGGPGMGPIGVASHLVPFLPGHPVLESGKNPQNIGAVAAAPWGSASILVISWMYIVMMGADGLTQATKVAILNANYIAKKLAAYYPVLYKGQNGLVAHECILDLRALKKSANIEIDDIAKRLIDYGFHAPTVSWPVAGTIMVEPTESESQAELDRFCEALIAIRQEIADIEAGKVDIQDNSLKNAPHTVESLIVGEWPHPYSREQAAYPAPWTREHKFWPSVGRIDAAFGDRNFVCSCLPMDAYN.

Lys731 is subject to N6-(pyridoxal phosphate)lysine.

It belongs to the GcvP family. The glycine cleavage system is composed of four proteins: P, T, L and H. Pyridoxal 5'-phosphate is required as a cofactor.

The catalysed reaction is N(6)-[(R)-lipoyl]-L-lysyl-[glycine-cleavage complex H protein] + glycine + H(+) = N(6)-[(R)-S(8)-aminomethyldihydrolipoyl]-L-lysyl-[glycine-cleavage complex H protein] + CO2. Its function is as follows. The glycine cleavage system catalyzes the degradation of glycine. The P protein binds the alpha-amino group of glycine through its pyridoxal phosphate cofactor; CO(2) is released and the remaining methylamine moiety is then transferred to the lipoamide cofactor of the H protein. This chain is Glycine dehydrogenase (decarboxylating), found in Nostoc sp. (strain PCC 7120 / SAG 25.82 / UTEX 2576).